The chain runs to 416 residues: UDP-N-acetylglucosamine 1-carboxyvinyltransferase (416 aa).

22-23 contributes to the phosphoenolpyruvate binding site; sequence KN. R92 provides a ligand contact to UDP-N-acetyl-alpha-D-glucosamine. C116 (proton donor) is an active-site residue. A 2-(S-cysteinyl)pyruvic acid O-phosphothioketal modification is found at C116. UDP-N-acetyl-alpha-D-glucosamine is bound by residues D306 and I328.

The protein belongs to the EPSP synthase family. MurA subfamily.

The protein localises to the cytoplasm. The enzyme catalyses phosphoenolpyruvate + UDP-N-acetyl-alpha-D-glucosamine = UDP-N-acetyl-3-O-(1-carboxyvinyl)-alpha-D-glucosamine + phosphate. It functions in the pathway cell wall biogenesis; peptidoglycan biosynthesis. In terms of biological role, cell wall formation. Adds enolpyruvyl to UDP-N-acetylglucosamine. The protein is UDP-N-acetylglucosamine 1-carboxyvinyltransferase of Buchnera aphidicola subsp. Baizongia pistaciae (strain Bp).